The sequence spans 417 residues: Tryptophan decarboxylase (417 aa).

Lysine 263 bears the N6-(pyridoxal phosphate)lysine mark.

Belongs to the group II decarboxylase family. Pyridoxal 5'-phosphate is required as a cofactor.

The protein resides in the cytoplasm. The catalysed reaction is L-tryptophan + H(+) = tryptamine + CO2. Inhibited by (S)-alpha-fluoromethyltryptophan. Its function is as follows. Catalyzes the decarboxylation of tryptophan to tryptamine. Tryptamine is a neurotransmitter that induces the release of serotonin, which is suggested to modulate gastrointestinal motility. Therefore, the tryptophan decarboxylase from the gut bacteria Clostridium sporogenes (strain ATCC 15579) may influence host brain and behavior. Has weak activity with tyrosine. Activity against phenylalanine is undetectable. This is Tryptophan decarboxylase from Clostridium sporogenes (strain ATCC 15579).